A 153-amino-acid polypeptide reads, in one-letter code: Large ribosomal subunit protein uL15 (153 aa).

The disordered stretch occupies residues 21-41; it reads RGIGSGKGKTGGRGIKGQKSR. Residues 23-35 are compositionally biased toward gly residues; the sequence is IGSGKGKTGGRGI.

This sequence belongs to the universal ribosomal protein uL15 family. In terms of assembly, part of the 50S ribosomal subunit.

In terms of biological role, binds to the 23S rRNA. The sequence is that of Large ribosomal subunit protein uL15 from Rickettsia africae (strain ESF-5).